The sequence spans 239 residues: Cytochrome b6-f complex iron-sulfur subunit 1, cyanelle (239 aa).

The transit peptide at 1–60 (MAFTTTAVVAPRGAKITGQSSTCAIQNGKTVAVGTSKQVGSFKPVFAAAKPAKETTFSVS) directs the protein to the cyanelle. The helical transmembrane segment at 81-101 (LLGAIAGPVAGAGGPFVSFLV) threads the bilayer. The Rieske domain maps to 125–221 (VSSWLETHKP…VSVLEDGVVA (97 aa)). 4 residues coordinate [2Fe-2S] cluster: Cys-167, His-169, Cys-185, and His-188. Cys-172 and Cys-187 are joined by a disulfide.

It belongs to the Rieske iron-sulfur protein family. As to quaternary structure, the 4 large subunits of the cytochrome b6-f complex are cytochrome b6, subunit IV (17 kDa polypeptide, petD), cytochrome f and the Rieske protein, while the 4 small subunits are petG, petL, petM and petN. The complex functions as a dimer. It depends on [2Fe-2S] cluster as a cofactor.

It is found in the plastid. The protein localises to the cyanelle thylakoid membrane. The catalysed reaction is 2 oxidized [plastocyanin] + a plastoquinol + 2 H(+)(in) = 2 reduced [plastocyanin] + a plastoquinone + 4 H(+)(out). In terms of biological role, component of the cytochrome b6-f complex, which mediates electron transfer between photosystem II (PSII) and photosystem I (PSI), cyclic electron flow around PSI, and state transitions. This chain is Cytochrome b6-f complex iron-sulfur subunit 1, cyanelle (petC-1), found in Cyanophora paradoxa.